The following is a 535-amino-acid chain: Transmembrane protein 151 homolog (535 aa).

The next 3 membrane-spanning stretches (helical) occupy residues 27-47 (GYGK…YATY), 73-93 (YNFV…MECW), and 254-274 (PWFL…SWPL). Residues 498 to 535 (ASISHSSSKDLKSLTLKNNNGAANNNNNNNNENPEEQP) form a disordered region. Residues 510 to 529 (SLTLKNNNGAANNNNNNNNE) are compositionally biased toward low complexity.

This sequence belongs to the TMEM151 family.

It localises to the membrane. The protein is Transmembrane protein 151 homolog of Caenorhabditis briggsae.